Consider the following 87-residue polypeptide: Lantipeptide prochlorosin 3.3 (87 aa).

Residues 1 to 64 (MSEEQLKAFI…DEELEAASGG (64 aa)) constitute a propeptide that is removed on maturation. T67 is modified (2,3-didehydrobutyrine). A cross-link (beta-methyllanthionine (Thr-Cys)) is located at residues 75–85 (TAGCYGGTKMC). Residues 78-82 (CYGGT) constitute a cross-link (beta-methyllanthionine (Cys-Thr)).

Post-translationally, cross-links are proved in vitro, when coepressed in E.coli with the ProcM lanthionine synthetase. The beta-methyllanthionine residues have a DL configuration (with 2S,3S,6R stereochemistry). In terms of processing, maturation of prochlorosin involves the enzymatic conversion of Thr, and Ser into dehydrated AA and the formation of thioether bonds with cysteines. This is followed by membrane translocation and cleavage of the modified precursor.

It is found in the secreted. Lanthionine-containing peptide (lantipeptide) with unknown function. Does not show antibiotic activity against Lactococcus lactis 117 and Bacillus subtilis 6633 bacteria. Organisms that produce this peptide live in oligotrophic environments at very dilute concentrations, suggesting this peptide is not secreted to influence other bacteria. This is Lantipeptide prochlorosin 3.3 from Prochlorococcus marinus (strain MIT 9313).